Consider the following 852-residue polypeptide: Protein SEY1 (852 aa).

Residues 1–738 are Cytoplasmic-facing; that stretch reads MNGHFAAIGN…KRSAIGGITQ (738 aa). Residues 47-294 form the GB1/RHD3-type G domain; that stretch reads GFNYHLISVF…IPADGLSVYA (248 aa). 57-64 contributes to the GTP binding site; the sequence is GSQSTGKS. Residues 475 to 500 are a coiled coil; the sequence is QYKLFEKELDEVSARLRKEEMRRLAI. The helical transmembrane segment at 739–759 threads the bilayer; sequence VPLYFYVILLILGWNEILMVL. Topologically, residues 760–762 are lumenal; the sequence is RNP. A helical transmembrane segment spans residues 763–783; sequence FLILLILVMGGGTYIAYSLNL. The Cytoplasmic segment spans residues 784–852; that stretch reads LGPMMQMSNA…AQDISDDDDI (69 aa).

Belongs to the TRAFAC class dynamin-like GTPase superfamily. GB1/RHD3 GTPase family. RHD3 subfamily.

The protein resides in the endoplasmic reticulum membrane. In terms of biological role, cooperates with the reticulon proteins and tubule-shaping DP1 family proteins to generate and maintain the structure of the tubular endoplasmic reticulum network. Has GTPase activity, which is required for its function in ER organization. The protein is Protein SEY1 of Podospora anserina (strain S / ATCC MYA-4624 / DSM 980 / FGSC 10383) (Pleurage anserina).